The sequence spans 360 residues: Malonyl CoA-acyl carrier protein transacylase, mitochondrial (360 aa).

The transit peptide at Met1–Asn24 directs the protein to the mitochondrion. Catalysis depends on residues Ser105 and His235.

This sequence belongs to the FabD family.

Its subcellular location is the mitochondrion. It catalyses the reaction holo-[ACP] + malonyl-CoA = malonyl-[ACP] + CoA. It participates in lipid metabolism; fatty acid biosynthesis. In terms of biological role, involved in biosynthesis of fatty acids in mitochondria. This Saccharomyces cerevisiae (strain ATCC 204508 / S288c) (Baker's yeast) protein is Malonyl CoA-acyl carrier protein transacylase, mitochondrial (MCT1).